The chain runs to 40 residues: Cytolysin EnT (40 aa).

Residues 3 to 12 are plays an important role in the hemolytic activity; it reads ALAGTIIEGA. Residues 11–30 are N-terminal region; it reads GASLTFSVLTTILDALGSVS.

The protein belongs to the actinoporin family. Sea anemone subfamily. In terms of assembly, octamer or nonamer in membranes. Monomer in the soluble state.

The protein localises to the secreted. Its subcellular location is the nematocyst. It localises to the target cell membrane. Its function is as follows. Pore-forming protein that forms cations-selective hydrophilic pores of around 1 nm and causes cytolysis. Pore formation is a multi-step process that involves specific recognition of membrane sphingomyelin (but neither cholesterol nor phosphatidylcholine) using aromatic rich region and adjacent phosphocholine (POC) binding site, firm binding to the membrane (mainly driven by hydrophobic interactions) accompanied by the transfer of the N-terminal region to the lipid-water interface and finally pore formation after oligomerization of monomers. This toxin shows hemolytic activities. In Entacmaea quadricolor (Bubble-tip anemone), this protein is Cytolysin EnT.